The sequence spans 216 residues: MAHRVDHEYDYLFKIVLIGDSGVGKSNILSRFTRNEFCLESKSTIGVEFATRTLQVEGKTVKAQIWDTAGQERYRAITSAYYRGAVGALLVYDITKRQTFDNVQRWLRELRDHADSNIVIMMAGNKSDLNHLRAVSEDDGGALSEKEGLSFLETSALEATNIEKAFQTILTEIYHIVSKKALAAQEATAGASVPGQGTTINVADTSGNTKKGCCST.

19 to 26 (GDSGVGKS) contributes to the GTP binding site. The Effector region signature appears at 41–49 (SKSTIGVEF). GTP-binding positions include 67–71 (DTAGQ) and 125–128 (NKSD). Residues Cys-213 and Cys-214 are each lipidated (S-geranylgeranyl cysteine).

The protein belongs to the small GTPase superfamily. Rab family.

Its subcellular location is the cell membrane. The protein is Ras-related protein Rab11C (RAB11C) of Lotus japonicus (Lotus corniculatus var. japonicus).